Consider the following 336-residue polypeptide: Syntaxin-31 (336 aa).

Residues 1–314 (MGSTFRDRTV…QHLTRISSNR (314 aa)) are Cytoplasmic-facing. Disordered regions lie at residues 23 to 53 (GAIP…KASR) and 152 to 218 (RSEN…SQLR). Over residues 154–163 (ENMKAHENRK) the composition is skewed to basic and acidic residues. Residues 164 to 181 (QLFSTKNAVDSPPQNNAK) are compositionally biased toward polar residues. Low complexity predominate over residues 190 to 202 (SSSSNPFGNLQQP). Residues 244 to 306 (ENYSQSRAVA…EGARSALLQH (63 aa)) enclose the t-SNARE coiled-coil homology domain. Residues 315 to 335 (WLMMKIFAVIILFLIVFLFFV) traverse the membrane as a helical; Anchor for type IV membrane protein segment. Residue A336 is a topological domain, vesicular.

This sequence belongs to the syntaxin family. As to quaternary structure, part of the t-SNARE complex. Interacts with CDC48A, but not with VPS45.

It is found in the golgi apparatus. The protein resides in the cis-Golgi network membrane. Its subcellular location is the cytoplasm. The protein localises to the endosome. Its function is as follows. Vesicle trafficking protein that functions in the secretory pathway. In Arabidopsis thaliana (Mouse-ear cress), this protein is Syntaxin-31 (SYP31).